The following is a 492-amino-acid chain: Glutamyl-tRNA(Gln) amidotransferase subunit A (492 aa).

Residues K79 and S154 each act as charge relay system in the active site. The active-site Acyl-ester intermediate is the S178.

This sequence belongs to the amidase family. GatA subfamily. Heterotrimer of A, B and C subunits.

The catalysed reaction is L-glutamyl-tRNA(Gln) + L-glutamine + ATP + H2O = L-glutaminyl-tRNA(Gln) + L-glutamate + ADP + phosphate + H(+). In terms of biological role, allows the formation of correctly charged Gln-tRNA(Gln) through the transamidation of misacylated Glu-tRNA(Gln) in organisms which lack glutaminyl-tRNA synthetase. The reaction takes place in the presence of glutamine and ATP through an activated gamma-phospho-Glu-tRNA(Gln). This chain is Glutamyl-tRNA(Gln) amidotransferase subunit A, found in Acinetobacter baylyi (strain ATCC 33305 / BD413 / ADP1).